The chain runs to 88 residues: Small ribosomal subunit protein uS17 (88 aa).

It belongs to the universal ribosomal protein uS17 family. In terms of assembly, part of the 30S ribosomal subunit.

One of the primary rRNA binding proteins, it binds specifically to the 5'-end of 16S ribosomal RNA. This is Small ribosomal subunit protein uS17 from Synechococcus sp. (strain WH7803).